A 125-amino-acid polypeptide reads, in one-letter code: MKLLTHNLLSSHVRGVGSRGFPLRLQATEVRICPVEFNPNFVARMIPKVEWSAFLEAADNLRLIQVPKGPVEGYEENEEFLRTMHHLLLEVEVIEGTLQCPESGRMFPISRGIPNMLLSEEETES.

One can recognise a TRM112 domain in the interval 2 to 119 (KLLTHNLLSS…SRGIPNMLLS (118 aa)). Ser-119 and Ser-125 each carry phosphoserine.

Belongs to the TRM112 family. As to quaternary structure, part of the heterodimeric BUD23-TRM112 methyltransferase complex; this heterodimerization is necessary for the metabolic stability and activity of the catalytic subunit BUD23. Part of the heterodimeric N6AMT1-TRM112 methyltransferase complex; this heterodimerization is necessary for S-adenosyl-L-methionine-binding to N6AMT1/HEMK2. Part of the heterodimeric ALKBH8-TRM112 methyltransferase complex. Part of the heterodimeric METTL5-TRM112 methyltransferase complex; this heterodimerization is necessary for the stability of the catalytic subunit METTL5. Part of the heterodimeric THUMPD3-TRM112 methyltransferase complex; this complex forms an active tRNA methyltransferase, where TRMT112 acts as an activator of the catalytic subunit THUMPD3. Part of the heterodimeric THUMPD2-TRM112 methyltransferase complex; this complex forms an active tRNA methyltransferase, where TRMT112 acts as an activator of the catalytic subunit THUMPD2. Part of the heterodimeric TRMT11-TRM112 methyltransferase complex; this complex forms an active tRNA methyltransferase, where TRMT112 acts as an activator of the catalytic subunit TRMT11.

The protein localises to the nucleus. The protein resides in the nucleoplasm. Its subcellular location is the cytoplasm. It localises to the perinuclear region. Acts as an activator of both rRNA/tRNA and protein methyltransferases. Together with methyltransferase BUD23, methylates the N(7) position of a guanine in 18S rRNA. The heterodimer with N6AMT1/HEMK2 catalyzes N5-methylation of ETF1 on 'Gln-185', using S-adenosyl L-methionine as methyl donor. The heterodimer with N6AMT1/HEMK2 also monomethylates 'Lys-12' of histone H4 (H4K12me1). The heterodimer with ALKBH8 catalyzes the methylation of 5-carboxymethyl uridine to 5-methylcarboxymethyl uridine at the wobble position of the anticodon loop in target tRNA species. Together with methyltransferase THUMPD3, catalyzes the formation of N(2)-methylguanosine at position 6 in a broad range of tRNA substrates and at position 7 of tRNA(Trp). Involved in the pre-rRNA processing steps leading to small-subunit rRNA production. Together with methyltransferase METTL5, specifically methylates the 6th position of adenine in position 1832 of 18S rRNA. In Homo sapiens (Human), this protein is Multifunctional methyltransferase subunit TRM112-like protein.